The sequence spans 162 residues: Protein-export protein SecB (162 aa).

It belongs to the SecB family. In terms of assembly, homotetramer, a dimer of dimers. One homotetramer interacts with 1 SecA dimer.

Its subcellular location is the cytoplasm. Functionally, one of the proteins required for the normal export of preproteins out of the cell cytoplasm. It is a molecular chaperone that binds to a subset of precursor proteins, maintaining them in a translocation-competent state. It also specifically binds to its receptor SecA. The polypeptide is Protein-export protein SecB (Pseudomonas syringae pv. syringae (strain B728a)).